We begin with the raw amino-acid sequence, 239 residues long: tRNA (guanine-N(7)-)-methyltransferase (239 aa).

A compositionally biased stretch (polar residues) spans 1 to 13 (MEAEVQQGQQSPE). The tract at residues 1–30 (MEAEVQQGQQSPEGQLEKRPPSPPWAGIPL) is disordered. S-adenosyl-L-methionine contacts are provided by Asp-72, Glu-97, Asn-124, and Asp-147. Asp-147 is a catalytic residue. Positions 151 and 183 each coordinate substrate.

It belongs to the class I-like SAM-binding methyltransferase superfamily. TrmB family.

It carries out the reaction guanosine(46) in tRNA + S-adenosyl-L-methionine = N(7)-methylguanosine(46) in tRNA + S-adenosyl-L-homocysteine. It participates in tRNA modification; N(7)-methylguanine-tRNA biosynthesis. In terms of biological role, catalyzes the formation of N(7)-methylguanine at position 46 (m7G46) in tRNA. This is tRNA (guanine-N(7)-)-methyltransferase from Synechococcus sp. (strain JA-2-3B'a(2-13)) (Cyanobacteria bacterium Yellowstone B-Prime).